We begin with the raw amino-acid sequence, 563 residues long: Cytochrome b (563 aa).

The next 12 helical transmembrane spans lie at 36 to 61, 81 to 104, 119 to 141, 193 to 220, 255 to 276, 326 to 345, 358 to 379, 387 to 409, 436 to 454, 458 to 476, 505 to 527, and 539 to 557; these read SYWLGAMVAASFAYTIITGLFLLLYY, SVLLFSHLYGSYIMILLAYIHMFR, WVTGVLLLALTLGASFFGYSLVS, RLLGWHIIMVFLLGVLFLFHFMLSERYG, LSIVLITWGIILFVPNLLANIN, ILTIALLVVGLVILMLLPFL, FWTWIMTTLAVYLVELSVWGYL, TSAQIEFLGPPLVIIGIIVYLWP, ILLGAVGTLSFAATLFNFI, TLINGIILVPLGLFAIYAL, IAFFGIIALFVVSLVLLGLMWTL, and MDLGVILLLWGVAIQLYHY. Heme-binding residues include His-87 and His-101. Residues His-198 and His-212 each coordinate heme.

Belongs to the cytochrome b family. It is a component of at least 2 distinct terminal oxidases, the quinol oxidase (SoxABC) and the alternate quinol oxidase with the core components SoxM and a Rieske Fe-S protein.

The protein localises to the cell membrane. Binds 2 heme groups (b586 and b606) which are not covalently bound to the protein. In Sulfolobus acidocaldarius (strain ATCC 33909 / DSM 639 / JCM 8929 / NBRC 15157 / NCIMB 11770), this protein is Cytochrome b (soxC).